We begin with the raw amino-acid sequence, 949 residues long: Bifunctional uridylyltransferase/uridylyl-removing enzyme (949 aa).

The uridylyltransferase stretch occupies residues 1 to 377 (MARHETSFPE…RFRNRVRKIA (377 aa)). The tract at residues 378-733 (GTLDFVDDGG…VRTHDFHAIT (356 aa)) is uridylyl-removing. The HD domain occupies 494-610 (VDEHLLRSVD…VDFAERVQSL (117 aa)). ACT domains lie at 734–816 (EITV…VIAS) and 845–926 (VIEV…ERMP). A disordered region spans residues 926-949 (PSGIIAPTPVSRVPHGSKTTKAET).

The protein belongs to the GlnD family. Mg(2+) is required as a cofactor.

The catalysed reaction is [protein-PII]-L-tyrosine + UTP = [protein-PII]-uridylyl-L-tyrosine + diphosphate. It catalyses the reaction [protein-PII]-uridylyl-L-tyrosine + H2O = [protein-PII]-L-tyrosine + UMP + H(+). Its activity is regulated as follows. Uridylyltransferase (UTase) activity is inhibited by glutamine, while glutamine activates uridylyl-removing (UR) activity. In terms of biological role, modifies, by uridylylation and deuridylylation, the PII regulatory proteins (GlnB and homologs), in response to the nitrogen status of the cell that GlnD senses through the glutamine level. Under low glutamine levels, catalyzes the conversion of the PII proteins and UTP to PII-UMP and PPi, while under higher glutamine levels, GlnD hydrolyzes PII-UMP to PII and UMP (deuridylylation). Thus, controls uridylylation state and activity of the PII proteins, and plays an important role in the regulation of nitrogen fixation and metabolism. This chain is Bifunctional uridylyltransferase/uridylyl-removing enzyme, found in Rhizobium meliloti (strain 1021) (Ensifer meliloti).